A 34-amino-acid chain; its full sequence is CIANRNGCQPDGSQGNCCSGYCHKEPGWVAGYCR.

3 disulfide bridges follow: Cys-1–Cys-18, Cys-8–Cys-22, and Cys-17–Cys-33.

Its subcellular location is the secreted. Functionally, has antifungal activity against C.glabrata. This chain is Antimicrobial peptide Alo-2, found in Acrocinus longimanus (Giant harlequin beetle).